The primary structure comprises 236 residues: Chorionic somatomammotropin hormone (236 aa).

Positions 1–36 (MAPASSHREHQWTCNLVRGSRLLLLLVVSNLILCQG) are cleaved as a signal peptide. 3 cysteine pairs are disulfide-bonded: Cys-44–Cys-51, Cys-97–Cys-212, and Cys-229–Cys-234.

Belongs to the somatotropin/prolactin family.

It is found in the secreted. The sequence is that of Chorionic somatomammotropin hormone (CSH) from Ovis aries (Sheep).